The chain runs to 85 residues: Putative RING finger protein 095L (85 aa).

The RING-type; degenerate zinc finger occupies 39 to 73 (CPIWYNYQVNTVFLPCAHVACYLCSKIIKNCHLCR).

The sequence is that of Putative RING finger protein 095L from Invertebrate iridescent virus 6 (IIV-6).